The sequence spans 514 residues: Cilia- and flagella-associated protein 53 (514 aa).

The stretch at 207 to 429 (EDRLAKERRE…ERINEGLKEL (223 aa)) forms a coiled coil.

Belongs to the CFAP53 family. Microtubule inner protein component of sperm flagellar doublet microtubules. Interacts with PIERCE1 and PIERCE2; the interactions link outer dynein arms docking complex (ODA-DC) to the internal microtubule inner proteins (MIP) in cilium axoneme. Interacts with CCDC38. Interacts with CCDC42 and IFT88. Interacts with centriolar satellite proteins PIBF1/CEP90 and PCM1. Interacts with dyneins DNAIC1, DNAIC2 AND DNAH11 and with ODA-DC component ODAD4/TTC25. Expressed in trachea multiciliated cells.

The protein resides in the cytoplasm. The protein localises to the cytoskeleton. It localises to the cilium axoneme. Its subcellular location is the flagellum axoneme. It is found in the microtubule organizing center. The protein resides in the centrosome. The protein localises to the centriolar satellite. It localises to the spindle pole. Microtubule inner protein (MIP) part of the dynein-decorated doublet microtubules (DMTs) in cilia axoneme, which is required for motile cilia beating. Regulates motility patterns of both 9+0 and 9+2 motile cilia through differential localization and recruitment of axonemal dynein components. Required for centriolar satellite integrity and non-motile cilium assembly. Required for motile cilium formation. Through its role in beating of primary cilia, involved in the establishment of organ laterality during embryogenesis. Required for sperm flagellum biogenesis and is essential for male fertility. The chain is Cilia- and flagella-associated protein 53 (CFAP53) from Bos taurus (Bovine).